The chain runs to 186 residues: Protein Syd (186 aa).

It belongs to the Syd family.

It is found in the cell inner membrane. Interacts with the SecY protein in vivo. May bind preferentially to an uncomplexed state of SecY, thus functioning either as a chelating agent for excess SecY in the cell or as a regulatory factor that negatively controls the translocase function. The chain is Protein Syd from Erwinia tasmaniensis (strain DSM 17950 / CFBP 7177 / CIP 109463 / NCPPB 4357 / Et1/99).